Here is a 357-residue protein sequence, read N- to C-terminus: uncharacterized protein (357 aa).

The first 19 residues, 1–19, serve as a signal peptide directing secretion; sequence MKRILSFIFIILFFNSSYA.

This is an uncharacterized protein from Rickettsia prowazekii (strain Madrid E).